A 206-amino-acid chain; its full sequence is Putative metal transport protein HI_1621 (206 aa).

A run of 6 helical transmembrane segments spans residues 6–26, 38–58, 72–92, 94–114, 136–156, and 165–185; these read GVLH…GIAV, LTAL…PVGI, FLGW…VIFF, FGGF…AVIA, IGAG…VLML, and LVWL…IISV.

This sequence belongs to the CbiM family.

The protein resides in the cell membrane. Functionally, may be involved in metal transport. This chain is Putative metal transport protein HI_1621, found in Haemophilus influenzae (strain ATCC 51907 / DSM 11121 / KW20 / Rd).